The chain runs to 43 residues: Hainantoxin F5-22.36 (43 aa).

3 cysteine pairs are disulfide-bonded: Cys-1/Cys-19, Cys-8/Cys-24, and Cys-18/Cys-38.

It belongs to the neurotoxin 14 (magi-1) family. 02 (HWTX-XVIc) subfamily. Expressed by the venom gland.

The protein resides in the secreted. In terms of biological role, probable ion channel inhibitor. The protein is Hainantoxin F5-22.36 of Cyriopagopus hainanus (Chinese bird spider).